A 389-amino-acid chain; its full sequence is DEAD-box ATP-dependent RNA helicase CshC (389 aa).

Positions 1 to 26 (MIKDMQPFLQQAWEKAGFKELTEIQK) match the Q motif motif. In terms of domain architecture, Helicase ATP-binding spans 29–199 (IPTILEGQDV…RDLAVEPQLV (171 aa)). 42 to 49 (SPTGTGKT) contacts ATP. A DEAD box motif is present at residues 147–150 (DEFD). Residues 209–379 (LVEHTYIICE…TKPKAPKKKK (171 aa)) form the Helicase C-terminal domain. The tract at residues 368 to 389 (VETKPKAPKKKKPAFTGKKKPR) is disordered. Basic residues predominate over residues 373–389 (KAPKKKKPAFTGKKKPR).

It carries out the reaction ATP + H2O = ADP + phosphate + H(+). In terms of biological role, DEAD-box RNA helicase. Probably has an RNA-dependent ATPase activity and a 3' to 5' RNA helicase activity that uses the energy of ATP hydrolysis to destabilize and unwind short RNA duplexes. In Bacillus cereus (strain ATCC 14579 / DSM 31 / CCUG 7414 / JCM 2152 / NBRC 15305 / NCIMB 9373 / NCTC 2599 / NRRL B-3711), this protein is DEAD-box ATP-dependent RNA helicase CshC (cshC).